A 668-amino-acid chain; its full sequence is DNA ligase (668 aa).

Residues 37 to 41, 86 to 87, and Glu-116 contribute to the NAD(+) site; these read DAIYD and SL. Residue Lys-118 is the N6-AMP-lysine intermediate of the active site. NAD(+)-binding residues include Arg-139, Glu-176, Lys-289, and Lys-313. Cys-407, Cys-410, Cys-425, and Cys-430 together coordinate Zn(2+). The 83-residue stretch at 586–668 folds into the BRCT domain; sequence AQSSALAGLT…RALIETREMP (83 aa).

Belongs to the NAD-dependent DNA ligase family. LigA subfamily. Requires Mg(2+) as cofactor. Mn(2+) is required as a cofactor.

The catalysed reaction is NAD(+) + (deoxyribonucleotide)n-3'-hydroxyl + 5'-phospho-(deoxyribonucleotide)m = (deoxyribonucleotide)n+m + AMP + beta-nicotinamide D-nucleotide.. Its function is as follows. DNA ligase that catalyzes the formation of phosphodiester linkages between 5'-phosphoryl and 3'-hydroxyl groups in double-stranded DNA using NAD as a coenzyme and as the energy source for the reaction. It is essential for DNA replication and repair of damaged DNA. This chain is DNA ligase, found in Gloeobacter violaceus (strain ATCC 29082 / PCC 7421).